The following is a 572-amino-acid chain: Sulfite reductase [NADPH] hemoprotein beta-component (572 aa).

Residues Cys-436, Cys-442, Cys-481, and Cys-485 each coordinate [4Fe-4S] cluster. Residue Cys-485 participates in siroheme binding.

The protein belongs to the nitrite and sulfite reductase 4Fe-4S domain family. As to quaternary structure, alpha(8)-beta(8). The alpha component is a flavoprotein, the beta component is a hemoprotein. Siroheme is required as a cofactor. The cofactor is [4Fe-4S] cluster.

It carries out the reaction hydrogen sulfide + 3 NADP(+) + 3 H2O = sulfite + 3 NADPH + 4 H(+). Its pathway is sulfur metabolism; hydrogen sulfide biosynthesis; hydrogen sulfide from sulfite (NADPH route): step 1/1. Functionally, component of the sulfite reductase complex that catalyzes the 6-electron reduction of sulfite to sulfide. This is one of several activities required for the biosynthesis of L-cysteine from sulfate. The chain is Sulfite reductase [NADPH] hemoprotein beta-component from Bacillus pumilus (strain SAFR-032).